The primary structure comprises 132 residues: Precursor of CEP10 (132 aa).

Positions 1-19 (MKLFIIIVVTSLTISKVFD) are cleaved as a signal peptide. Positions 20–66 (KTLVTIEARNLRKMDRHEHFNANEDFVEAKMLKKIDNKNNLNNRCIN) are excised as a propeptide. Hydroxyproline occurs at positions 70 and 73. Positions 82 to 91 (PKVINNKFTK) are excised as a propeptide. A hydroxyproline mark is found at Pro-95, Pro-98, and Pro-102. Positions 107-116 (LRVVNNKFTN) are excised as a propeptide. Residues Pro-120, Pro-123, and Pro-127 each carry the hydroxyproline modification. A propeptide is located at residue Pro-132.

Belongs to the C-terminally encoded plant signaling peptide (CEP) family. In terms of assembly, interacts with CEP receptors (e.g. CEPR1 and CEPR2). The mature small signaling peptide is generated by proteolytic processing of the longer precursor.

The protein resides in the secreted. The protein localises to the extracellular space. Its subcellular location is the apoplast. Functionally, extracellular signaling peptide that may regulate primary root growth rate and systemic nitrogen (N)-demand signaling. This chain is Precursor of CEP10, found in Arabidopsis thaliana (Mouse-ear cress).